Consider the following 244-residue polypeptide: Lactate utilization protein A (244 aa).

The protein belongs to the LutA/YkgE family.

Is involved in L-lactate degradation and allows cells to grow with lactate as the sole carbon source. This Oceanobacillus iheyensis (strain DSM 14371 / CIP 107618 / JCM 11309 / KCTC 3954 / HTE831) protein is Lactate utilization protein A.